The primary structure comprises 247 residues: MSDPLILIPARLAATRLPSKPLADIAGEPMIVHVWRRAVEAGIGPVVVATDTDAIAAAIEAQGGLAVMTQPDHPSGSDRLAEALEIVDPDGNHDVVVNVQGDLPTIDPAIIAASVTPLADPQVDIATLCAVIHRPEEMDDPNVVKIIGHTVGPNRLRALAFTRARAPWGEGPLFHHIGLYAYRRKALARFVALPQGELERREKLEQLRALEAGMRIDAMIVEDLPLGVDTPADLERARTLLAIRRLN.

This sequence belongs to the KdsB family.

It localises to the cytoplasm. The catalysed reaction is 3-deoxy-alpha-D-manno-oct-2-ulosonate + CTP = CMP-3-deoxy-beta-D-manno-octulosonate + diphosphate. It participates in nucleotide-sugar biosynthesis; CMP-3-deoxy-D-manno-octulosonate biosynthesis; CMP-3-deoxy-D-manno-octulosonate from 3-deoxy-D-manno-octulosonate and CTP: step 1/1. It functions in the pathway bacterial outer membrane biogenesis; lipopolysaccharide biosynthesis. Functionally, activates KDO (a required 8-carbon sugar) for incorporation into bacterial lipopolysaccharide in Gram-negative bacteria. This Methylorubrum populi (strain ATCC BAA-705 / NCIMB 13946 / BJ001) (Methylobacterium populi) protein is 3-deoxy-manno-octulosonate cytidylyltransferase.